An 87-amino-acid polypeptide reads, in one-letter code: X protein (87 aa).

Residues 5-16 (LRLTLLELVRRL) form a nuclear export signal region. Residues 18-87 (GNATIESGRL…PANRKGAAVE (70 aa)) are disordered. Low complexity predominate over residues 36–48 (DTTTGTTGVTKTT).

In terms of assembly, interacts with P and N proteins. These interactions presumably promote nuclear targeting of the X protein in infected cells. Interacts with host MAVS; this interaction inhibits MAVS-induced apoptosis. Phosphorylated.

The protein resides in the host nucleus. It localises to the host mitochondrion. Functionally, plays an essential role in the inhibition of host apoptosis. Mediates host mitochondria-mediated apoptosis through interaction with the mitochondrial antiviral signaling protein/MAVS and thereby promotes viral persistence in host central nervous system. Within the host nucleus, regulates viral RNA synthesis and polymerase complex assembly. The sequence is that of X protein (P/X) from Borna disease virus 1 (BoDV-1).